A 718-amino-acid polypeptide reads, in one-letter code: DNA ligase (718 aa).

Residues 44–48 (DADYD), 93–94 (SL), and E127 each bind NAD(+). Catalysis depends on K129, which acts as the N6-AMP-lysine intermediate. Residues R150, E186, K302, and K326 each coordinate NAD(+). 4 residues coordinate Zn(2+): C432, C435, C456, and C462. Residues 640–718 (TAGSPVAGKT…EDEWLALISG (79 aa)) enclose the BRCT domain.

The protein belongs to the NAD-dependent DNA ligase family. LigA subfamily. Mg(2+) is required as a cofactor. Requires Mn(2+) as cofactor.

It carries out the reaction NAD(+) + (deoxyribonucleotide)n-3'-hydroxyl + 5'-phospho-(deoxyribonucleotide)m = (deoxyribonucleotide)n+m + AMP + beta-nicotinamide D-nucleotide.. Its function is as follows. DNA ligase that catalyzes the formation of phosphodiester linkages between 5'-phosphoryl and 3'-hydroxyl groups in double-stranded DNA using NAD as a coenzyme and as the energy source for the reaction. It is essential for DNA replication and repair of damaged DNA. This Rhizobium etli (strain CIAT 652) protein is DNA ligase.